The sequence spans 728 residues: Probable LRR receptor-like serine/threonine-protein kinase At1g14390 (728 aa).

Positions 1–27 (MHSSSKSQAFSLTFLLFLFLLPSVSES) are cleaved as a signal peptide. Residues 28–356 (QLISSESRTL…EEDTGIELGL (329 aa)) are Extracellular-facing. Asparagine 55 and asparagine 85 each carry an N-linked (GlcNAc...) asparagine glycan. LRR repeat units follow at residues 74-96 (NGHVTELTVTGNRTVKLPGRFSS), 106-130 (LSNLKTLSLVSLGISGPLPSQIIRL), 131-155 (SSSLQSLNLSSNFISGNIPKEISSL), 157-178 (NLRSLVLANNLFNGSVPDLRGL), 179-202 (SNLQELNLGGNKLGPEVVPSLASN), 204-224 (ITISLKNNSFGSKIPEQIKKL), 225-248 (NKLQSLDLSSNKFTGSIPRFLLSL), 249-272 (PSLQNLSLAQNLLSGSLPNSSLCN), and 274-295 (KLRILDVSRNLLTGKLPSCFSS). 2 N-linked (GlcNAc...) asparagine glycosylation sites follow: asparagine 138 and asparagine 169. N-linked (GlcNAc...) asparagine glycosylation is present at asparagine 210. Residues asparagine 253 and asparagine 267 are each glycosylated (N-linked (GlcNAc...) asparagine). A helical transmembrane segment spans residues 357–377 (VIGIIIGVILVSAVLAGLVLV). Over 378 to 728 (RMRKSRSKEE…ENLGLGGSEL (351 aa)) the chain is Cytoplasmic. The 289-residue stretch at 421–709 (TMRSAVIGLS…DVVWNLQYTI (289 aa)) folds into the Protein kinase domain.

This sequence belongs to the protein kinase superfamily. Ser/Thr protein kinase family.

The protein resides in the membrane. The catalysed reaction is L-seryl-[protein] + ATP = O-phospho-L-seryl-[protein] + ADP + H(+). It catalyses the reaction L-threonyl-[protein] + ATP = O-phospho-L-threonyl-[protein] + ADP + H(+). The protein is Probable LRR receptor-like serine/threonine-protein kinase At1g14390 of Arabidopsis thaliana (Mouse-ear cress).